Reading from the N-terminus, the 801-residue chain is Probable inorganic carbon transporter subunit DabA (801 aa).

Cysteine 298, aspartate 300, histidine 481, and cysteine 496 together coordinate Zn(2+). The segment at 575-596 (RENAAAERAESMGSDASSGVSE) is disordered.

This sequence belongs to the inorganic carbon transporter (TC 9.A.2) DabA family. In terms of assembly, forms a complex with DabB. It depends on Zn(2+) as a cofactor.

It is found in the cell membrane. In terms of biological role, part of an energy-coupled inorganic carbon pump. This chain is Probable inorganic carbon transporter subunit DabA, found in Haloarcula marismortui (strain ATCC 43049 / DSM 3752 / JCM 8966 / VKM B-1809) (Halobacterium marismortui).